An 866-amino-acid chain; its full sequence is Potassium voltage-gated channel subfamily KQT member 3 (866 aa).

A disordered region spans residues 1–42 (MGLKARRPAGAAGGGGDGGGGGGGAANPAGGDAAAAGDEERK). At 1–120 (MGLKARRPAG…IYDALERPRG (120 aa)) the chain is on the cytoplasmic side. Residues 11 to 25 (AAGGGGDGGGGGGGA) are compositionally biased toward gly residues. Over residues 26–36 (ANPAGGDAAAA) the composition is skewed to low complexity. Threonine 81 bears the Phosphothreonine mark. Residues 121-143 (WALLYHALVFLIVLGCLILAVLT) form a helical membrane-spanning segment. Residues 144 to 153 (TFREYETVSG) lie on the Extracellular side of the membrane. The chain crosses the membrane as a helical span at residues 154–175 (DWLLLLETFAIFIFGAEFALRI). Over 176–193 (WAAGCCCRYKGWRGRLKF) the chain is Cytoplasmic. The helical transmembrane segment at 194 to 213 (ARKPLCMLDIFVLIASVPVV) threads the bilayer. Topologically, residues 214-225 (AVGNQGNVLATS) are extracellular. Residues 226–244 (LRSLRFLQILRMLRMDRRG) traverse the membrane as a helical; Voltage-sensor segment. Position 243 (arginine 243) interacts with a 1,2-diacyl-sn-glycero-3-phospho-(1D-myo-inositol-4,5-bisphosphate). Residues 245–256 (GTWKLLGSAICA) lie on the Cytoplasmic side of the membrane. A helical transmembrane segment spans residues 257–282 (HSKELITAWYIGFLTLILSSFLVYLV). A 1,2-diacyl-sn-glycero-3-phospho-(1D-myo-inositol-4,5-bisphosphate) is bound at residue lysine 259. Topologically, residues 283–302 (EKDVPEVDAQGEEMKEEFET) are extracellular. The segment at residues 303-315 (YADALWWGLITLA) is an intramembrane region (pore-forming). A Selectivity filter motif is present at residues 316–321 (TIGYGD). Topologically, residues 316-326 (TIGYGDKTPKT) are extracellular. A helical membrane pass occupies residues 327 to 353 (WEGRLIAATFSLIGVSFFALPAGILGS). The Cytoplasmic segment spans residues 354–866 (GLALKVQEQH…SIWTPSGKPT (513 aa)). The mediates interaction with calmodulin stretch occupies residues 356 to 537 (ALKVQEQHRQ…RLYKKKFKET (182 aa)). Lysine 366 is a binding site for a 1,2-diacyl-sn-glycero-3-phospho-(1D-myo-inositol-4,5-bisphosphate). 3 disordered regions span residues 574 to 617 (PGPP…EDQS), 656 to 676 (GFSP…EDRR), and 757 to 866 (QVEL…GKPT). A compositionally biased stretch (polar residues) spans 837–866 (EPFTPSGSLPLSSTGDGISDSIWTPSGKPT).

It belongs to the potassium channel family. KQT (TC 1.A.1.15) subfamily. Kv7.3/KCNQ3 sub-subfamily. In terms of assembly, heterotetramer with KCNQ2; forms heterotetrameric native M-channel responsible for the M-current. Interacts with calmodulin; the interaction is calcium-independent, constitutive and participates in the proper assembly of a functional M-channel. Heteromultimer with KCNQ5. May associate with KCNE2. Interacts with IQCJ-SCHIP1. Interacts (via the pore module) with SLC5A3/SMIT1; forms a coregulatory complex that alters ion selectivity, voltage dependence and gating kinetics of the channel. Post-translationally, KCNQ2/KCNQ3 are ubiquitinated by NEDD4L. Ubiquitination leads to protein degradation. Degradation induced by NEDD4L is inhibited by USP36.

It localises to the cell membrane. It carries out the reaction K(+)(in) = K(+)(out). It catalyses the reaction Rb(+)(in) = Rb(+)(out). The enzyme catalyses Cs(+)(in) = Cs(+)(out). The catalysed reaction is Na(+)(in) = Na(+)(out). Its activity is regulated as follows. Phosphatidylinositol-4,5-bisphosphate (PIP2) potentiates the activation of KCNQ channels by enhancing the electro-mechanical coupling of the voltage-sensing domain (VSD) and the pore-forming domain (PD). In the closed state of the channel, PIP2 is anchored at the S2-S3 loop; upon channel activation, PIP2 interacts with the S4-S5 linker and is involved in channel gating. Calcium suppresses KCNQ2-KCNQ3 channel currents, with calcium-bound calmodulin inducing a change in channel configuration which leads to the reduction of channel affinity for PIP2 and subsequent current suppression. Pore-forming subunit of the voltage-gated potassium (Kv) M-channel which is responsible for the M-current, a key controller of neuronal excitability. M-channel is composed of pore-forming subunits KCNQ2 and KCNQ3 assembled as heterotetramers. The native M-current has a slowly activating and deactivating potassium conductance which plays a critical role in determining the subthreshold electrical excitability of neurons as well as the responsiveness to synaptic inputs. M-channel is selectively permeable in vitro to other cations besides potassium, in decreasing order of affinity K(+) &gt; Rb(+) &gt; Cs(+) &gt; Na(+). M-channel association with SLC5A3/SMIT1 alters channel ion selectivity, increasing Na(+) and Cs(+) permeation relative to K(+). Suppressed by activation of M1 muscarinic acetylcholine receptors. KCNQ3 also associates with KCNQ5 to form a functional channel in vitro and may also contribute to the M-current in brain. The sequence is that of Potassium voltage-gated channel subfamily KQT member 3 from Bos taurus (Bovine).